The sequence spans 486 residues: Vacuolar protein sorting-associated protein 73 (486 aa).

Topologically, residues 1–26 (MNRILSSASLLSNVSMPRQNKHKITK) are cytoplasmic. The chain crosses the membrane as a helical span at residues 27-47 (ALCYAIIVASIGSIQFGYHLS). At 48-90 (ELNAPQQVLSCSEFDIPMEGYPYDRTWLGKRGYKQCIPLNDEQ) the chain is on the mitochondrial intermembrane side. A helical membrane pass occupies residues 91-111 (IGIVTSVFCIGGILGSYFATS). Over 112–119 (LANIYGRK) the chain is Cytoplasmic. Residues 120–140 (FSSLINCTLNIVGSLIIFNSN) form a helical membrane-spanning segment. Over 141-146 (SYRGLI) the chain is Mitochondrial intermembrane. Residues 147-167 (IGRILVGISCGSLIVIIPLFI) form a helical membrane-spanning segment. At 168–178 (KEVAPSGWEGL) the chain is on the cytoplasmic side. Residues 179 to 199 (LGSMTQICIRLGVLLTQGIAL) traverse the membrane as a helical segment. At 200–208 (PLTDSYRWR) the chain is on the mitochondrial intermembrane side. Residues 209–229 (WILFGSFLIAVLNFFMWFIVD) traverse the membrane as a helical segment. Over 230-305 (ESPKWLLAHG…RDRTNVKSRH (76 aa)) the chain is Cytoplasmic. Residues 306–326 (VITVLLFGQQFCGINSIVLYG) form a helical membrane-spanning segment. Topologically, residues 327-342 (TKIISQLYPQHAIRIN) are mitochondrial intermembrane. A helical transmembrane segment spans residues 343–363 (FFISMVNVLVTILVSLLIHSL). Residues 364–366 (PRK) are Cytoplasmic-facing. Residues 367–387 (PLLMTSTVLVSVTAFIMGIAM) traverse the membrane as a helical segment. Residues 388–396 (NHNKMNLLI) are Mitochondrial intermembrane-facing. The chain crosses the membrane as a helical span at residues 397–417 (VFSFIYMGVFTMGLNPLPFII). Over 418–432 (MREVSKPQDMVLAQR) the chain is Cytoplasmic. The helical transmembrane segment at 433 to 453 (YGTICNWVGTFIIAYTFPIIH) threads the bilayer. Residue D454 is a topological domain, mitochondrial intermembrane. A helical transmembrane segment spans residues 455 to 475 (VLSGYVFIIFAIIACSISAFI). Topologically, residues 476–486 (WKKVPETKRSG) are cytoplasmic.

The protein belongs to the major facilitator superfamily. Sugar transporter (TC 2.A.1.1) family.

Its subcellular location is the mitochondrion membrane. Its function is as follows. May be involved in vacuolar protein sorting. This is Vacuolar protein sorting-associated protein 73 (VPS73) from Saccharomyces cerevisiae (strain ATCC 204508 / S288c) (Baker's yeast).